The following is a 533-amino-acid chain: Invertase (533 aa).

Positions 1–22 (MVQVLSVLVIPLLTLFFGYVAS) are cleaved as a signal peptide. Substrate contacts are provided by residues 47–50 (WMND) and Gln68. Residue Asp50 is part of the active site. Asn72 is a glycosylation site (N-linked (GlcNAc...) asparagine). Substrate is bound at residue 110–111 (FS). 3 N-linked (GlcNAc...) asparagine glycosylation sites follow: Asn119, Asn120, and Asn126. 178–179 (RD) is a binding site for substrate. Residue Asn219 is glycosylated (N-linked (GlcNAc...) asparagine). Trp314 is a substrate binding site. Residues Asn334, Asn392, and Asn419 are each glycosylated (N-linked (GlcNAc...) asparagine).

The protein belongs to the glycosyl hydrolase 32 family.

The enzyme catalyses Hydrolysis of terminal non-reducing beta-D-fructofuranoside residues in beta-D-fructofuranosides.. The chain is Invertase (INV) from Schwanniomyces occidentalis (Yeast).